A 371-amino-acid polypeptide reads, in one-letter code: Nuclear hormone receptor family member nhr-51 (371 aa).

A DNA-binding region (nuclear receptor) is located at residues 2–77 (NKNCLICHRK…MGMQAFPRRV (76 aa)). 2 consecutive NR C4-type zinc fingers follow at residues 5-25 (CLIC…CFAC) and 41-60 (CQKF…CKAC). Positions 98-337 (MDEQRHWRML…KQLVTDTFVD (240 aa)) constitute an NR LBD domain.

Belongs to the nuclear hormone receptor family.

Its subcellular location is the nucleus. Functionally, orphan nuclear receptor. The polypeptide is Nuclear hormone receptor family member nhr-51 (nhr-51) (Caenorhabditis elegans).